We begin with the raw amino-acid sequence, 278 residues long: BPI fold-containing family A member 1 (278 aa).

An N-terminal signal peptide occupies residues 1–19 (MFLVGSLVVLCGLLAHSTA). Repeat repeat units follow at residues 23–28 (GLPLPL), 30–36 (QGPPLPL), 39–44 (GPPLPL), and 47–52 (GQLLPL). The 4 X 6 AA repeats of G-[LPQ]-[PL]-L-P-L stretch occupies residues 23–52 (GLPLPLGQGPPLPLNQGPPLPLNQGQLLPL). Residues 112–117 (LVGGLL) form an important for surfactant activity and antibacterial properties region. Residues N182 and N228 are each glycosylated (N-linked (GlcNAc...) asparagine). A disulfide bridge links C204 with C246.

Belongs to the BPI/LBP/Plunc superfamily. Plunc family. Monomer. Interacts (via N-terminus) with SCNN1B, a subunit of the heterotrimeric epithelial sodium channel (ENaC); this inhibits proteolytic activation of ENaC. As to expression, detected in airway epithelia (trachea and lung) and in bronchoalveolar fluid (at protein level). Upper airways, nasopharyngeal epithelium and thymus. Highest expression in the trachea and progressive decrease from proximal (bronchial) to distal (bronchiolar) airways. No expression is detected in the terminal bronchioles, respiratory bronchioles or lung alveoli.

It is found in the secreted. Its function is as follows. Lipid-binding protein which shows high specificity for the surfactant phospholipid dipalmitoylphosphatidylcholine (DPPC). Plays a role in the innate immune responses of the upper airways. Reduces the surface tension in secretions from airway epithelia and inhibits the formation of biofilm by pathogenic Gram-negative bacteria, such as P.aeruginosa and K.pneumoniae. Negatively regulates proteolytic cleavage of SCNN1G, an event that is required for activation of the epithelial sodium channel (ENaC), and thereby contributes to airway surface liquid homeostasis and proper clearance of mucus. Plays a role in the airway inflammatory response after exposure to irritants. May attract macrophages and neutrophils. The protein is BPI fold-containing family A member 1 (Bpifa1) of Mus musculus (Mouse).